We begin with the raw amino-acid sequence, 602 residues long: Prostaglandin G/H synthase 1 (602 aa).

Positions 1–26 are cleaved as a signal peptide; it reads MSRRSLSLQFPLLLLLLLLPPPPVLL. Residues 34-72 enclose the EGF-like domain; that stretch reads PVNPCCYYPCQNQGVCVRFGLDHYQCDCTRTGYSGPNCT. 4 disulfide bridges follow: C38–C49, C39–C161, C43–C59, and C61–C71. Residues N70, N106, and N146 are each glycosylated (N-linked (GlcNAc...) asparagine). H209 (proton acceptor) is an active-site residue. Y387 (for cyclooxygenase activity) is an active-site residue. Position 390 (H390) interacts with heme b. An N-linked (GlcNAc...) asparagine glycan is attached at N412. A disulfide bridge links C571 with C577.

Belongs to the prostaglandin G/H synthase family. Homodimer. Heme b serves as cofactor.

Its subcellular location is the microsome membrane. It localises to the endoplasmic reticulum membrane. It carries out the reaction (5Z,8Z,11Z,14Z)-eicosatetraenoate + AH2 + 2 O2 = prostaglandin H2 + A + H2O. The enzyme catalyses (5Z,8Z,11Z,14Z)-eicosatetraenoate + 2 O2 = prostaglandin G2. It catalyses the reaction prostaglandin G2 + AH2 = prostaglandin H2 + A + H2O. The catalysed reaction is (9Z,12Z)-octadecadienoate + AH2 + O2 = (9R)-hydroxy-(10E,12Z)-octadecadienoate + A + H2O. It carries out the reaction (9Z,12Z)-octadecadienoate + AH2 + O2 = (9S)-hydroxy-(10E,12Z)-octadecadienoate + A + H2O. The enzyme catalyses (9Z,12Z)-octadecadienoate + AH2 + O2 = (13S)-hydroxy-(9Z,11E)-octadecadienoate + A + H2O. It catalyses the reaction (9Z,12Z)-octadecadienoate + AH2 + O2 = (13R)-hydroxy-(9Z,11E)-octadecadienoate + A + H2O. It participates in lipid metabolism; prostaglandin biosynthesis. Its activity is regulated as follows. The cyclooxygenase activity is inhibited by nonsteroidal anti-inflammatory drugs (NSAIDs) including ibuprofen, flurbiprofen, ketoprofen, naproxen, flurbiprofen, anirolac, fenclofenac and diclofenac. Functionally, dual cyclooxygenase and peroxidase that plays an important role in the biosynthesis pathway of prostanoids, a class of C20 oxylipins mainly derived from arachidonate ((5Z,8Z,11Z,14Z)-eicosatetraenoate, AA, C20:4(n-6)), with a particular role in the inflammatory response. The cyclooxygenase activity oxygenates AA to the hydroperoxy endoperoxide prostaglandin G2 (PGG2), and the peroxidase activity reduces PGG2 to the hydroxy endoperoxide prostaglandin H2 (PGH2), the precursor of all 2-series prostaglandins and thromboxanes. This complex transformation is initiated by abstraction of hydrogen at carbon 13 (with S-stereochemistry), followed by insertion of molecular O2 to form the endoperoxide bridge between carbon 9 and 11 that defines prostaglandins. The insertion of a second molecule of O2 (bis-oxygenase activity) yields a hydroperoxy group in PGG2 that is then reduced to PGH2 by two electrons. Involved in the constitutive production of prostanoids in particular in the stomach and platelets. In gastric epithelial cells, it is a key step in the generation of prostaglandins, such as prostaglandin E2 (PGE2), which plays an important role in cytoprotection. In platelets, it is involved in the generation of thromboxane A2 (TXA2), which promotes platelet activation and aggregation, vasoconstriction and proliferation of vascular smooth muscle cells. Can also use linoleate (LA, (9Z,12Z)-octadecadienoate, C18:2(n-6)) as substrate and produce hydroxyoctadecadienoates (HODEs) in a regio- and stereospecific manner, being (9R)-HODE ((9R)-hydroxy-(10E,12Z)-octadecadienoate) and (13S)-HODE ((13S)-hydroxy-(9Z,11E)-octadecadienoate) its major products. The protein is Prostaglandin G/H synthase 1 of Rattus norvegicus (Rat).